Reading from the N-terminus, the 173-residue chain is Large ribosomal subunit protein bL9 (173 aa).

Belongs to the bacterial ribosomal protein bL9 family.

Functionally, binds to the 23S rRNA. The sequence is that of Large ribosomal subunit protein bL9 from Rickettsia bellii (strain RML369-C).